A 175-amino-acid chain; its full sequence is Electron transport protein HydN (175 aa).

4Fe-4S ferredoxin-type domains are found at residues 2 to 32 (NRFI…NQDC), 48 to 79 (KGVN…SRDK), 80 to 109 (GFVH…VVVR), and 124 to 157 (DKAE…CVDR). 16 residues coordinate [4Fe-4S] cluster: cysteine 12, cysteine 15, cysteine 18, cysteine 22, cysteine 58, cysteine 61, cysteine 66, cysteine 70, cysteine 89, cysteine 92, cysteine 95, cysteine 99, cysteine 131, cysteine 134, cysteine 143, and cysteine 147.

The cofactor is [4Fe-4S] cluster.

Its function is as follows. Electron transport from formate to hydrogen. In Escherichia coli O157:H7, this protein is Electron transport protein HydN (hydN).